The primary structure comprises 734 residues: MALRFPRFSQGLAQDPTTRRIWFGIATAHDFESHDDITEERLYQNIFASHFGQLAIIFLWTSGNLFHVAWQGNFESWVQDPLHVRPIAHAIWDPHFGQPAVEAFTRGGALGPVNIAYSGVYQWWYTIGLRTNEDLYTGALFLLFISAIFLIAGWLHLQPKWKPSVSWFKNAESRLNHHLSGLFGVSSLAWTGHLVHVAIPGSRGEYVRWNNFLDVLPHPQGLGPLFTGQWNLYAQNPDSGSHLFGTSQGAGTAILTLLGGFHPQTQSLWLTDIAHHHLAIAFIFLVAGHMYRTNFGIGHSMKDLLDAHIPPGGRLGRGHKGLYDTINNSLHFQLGLALASLGVITSLVAQHMYSLPAYAFIAQDFTTQAALYTHHQYIAGFIMTGAFAHGAIFFIRDYNPEQNEDNVLARMLDHKEAIISHLSWASLFLGFHTLGLYVHNDVMLAFGTPEKQILIEPIFAQWIQSAHGKTSYGFDVLLSSTSGPAFNAGRSIWLPGWLNAVNENSNSLFLTIGPGDFLVHHAIALGLHTTTLILVKGALDARGSKLMPDKKDFGYSFPCDGPGRGGTCDISAWDAFYLAVFWMLNTIGWVTFYWHWKHITLWQGNVSQFNESSTYLMGWLRDYLWLNSSQLINGYNPFGMNSLSVWAWMFLFGHLVWAIGFMFLISWRGYWQELIETLAWAHERTPLANLIRWRDKPVALSIVQARLVGLAHFSVGYIFTYAAFLIASTSGKFG.

8 helical membrane passes run 46–69 (IFAS…FHVA), 135–158 (LYTG…LHLQ), 175–199 (LNHH…HVAI), 273–291 (IAHH…GHMY), 330–353 (LHFQ…QHMY), 369–395 (AALY…IFFI), 417–439 (AIIS…LYVH), and 517–535 (FLVH…LILV). Residues Cys559 and Cys568 each contribute to the [4Fe-4S] cluster site. A run of 2 helical transmembrane segments spans residues 575–596 (AFYL…YWHW) and 643–665 (LSVW…MFLI). Chlorophyll a contacts are provided by His654, Met662, and Tyr670. Residue Trp671 participates in phylloquinone binding. Residues 707–727 (LVGLAHFSVGYIFTYAAFLIA) traverse the membrane as a helical segment.

The protein belongs to the PsaA/PsaB family. In terms of assembly, the PsaA/B heterodimer binds the P700 chlorophyll special pair and subsequent electron acceptors. PSI consists of a core antenna complex that captures photons, and an electron transfer chain that converts photonic excitation into a charge separation. The eukaryotic PSI reaction center is composed of at least 11 subunits. Requires P700 is a chlorophyll a/chlorophyll a' dimer, A0 is one or more chlorophyll a, A1 is one or both phylloquinones and FX is a shared 4Fe-4S iron-sulfur center. as cofactor.

Its subcellular location is the plastid. It is found in the chloroplast thylakoid membrane. The enzyme catalyses reduced [plastocyanin] + hnu + oxidized [2Fe-2S]-[ferredoxin] = oxidized [plastocyanin] + reduced [2Fe-2S]-[ferredoxin]. Its function is as follows. PsaA and PsaB bind P700, the primary electron donor of photosystem I (PSI), as well as the electron acceptors A0, A1 and FX. PSI is a plastocyanin-ferredoxin oxidoreductase, converting photonic excitation into a charge separation, which transfers an electron from the donor P700 chlorophyll pair to the spectroscopically characterized acceptors A0, A1, FX, FA and FB in turn. Oxidized P700 is reduced on the lumenal side of the thylakoid membrane by plastocyanin. The protein is Photosystem I P700 chlorophyll a apoprotein A2 of Coffea arabica (Arabian coffee).